Consider the following 263-residue polypeptide: Lens fiber major intrinsic protein (263 aa).

Residues 1 to 9 lie on the Cytoplasmic side of the membrane; it reads MWELRSASF. A helical transmembrane segment spans residues 10–29; sequence WRAIFAEFFATLFYVFFGLG. Residues 30–41 lie on the Extracellular side of the membrane; that stretch reads ASLRWAPGPLHV. A helical transmembrane segment spans residues 42 to 59; sequence LQVALAFGLALATLVQAV. The Cytoplasmic portion of the chain corresponds to 60–61; sequence GH. The segment at residues 62-77 is an intramembrane region (discontinuously helical); sequence ISGAHVNPAVTFAFLV. Residues 68–70 carry the NPA 1 motif; it reads NPA. Residues 78 to 82 are Cytoplasmic-facing; sequence GSQMS. Residues 83–106 traverse the membrane as a helical segment; it reads LLRAICYMAAQLLGAVAGAAVLYS. Residues 107–127 are Extracellular-facing; that stretch reads VTPAAVRGNLALNTLHPGVSL. The helical transmembrane segment at 128-148 threads the bilayer; the sequence is GQATTVEIFLTLQFVLCIFAT. At 149-156 the chain is on the cytoplasmic side; sequence YDERRNGR. Residues 157–175 traverse the membrane as a helical segment; sequence LGSVALAVGFSLTLGHLFG. The Extracellular portion of the chain corresponds to 176 to 178; sequence MYY. The discontinuously helical intramembrane region spans 179–193; the sequence is TGAGMNPARSFAPAI. The NPA 2 motif lies at 184–186; that stretch reads NPA. Residues 194-200 are Extracellular-facing; that stretch reads LTRNFTN. Residues 201–222 traverse the membrane as a helical segment; the sequence is HWVYWVGPIIGGGLASLLYDFL. At 223-263 the chain is on the cytoplasmic side; it reads LFPRLKSVSERLSILKGARPSDSNGQPEGTGEPVELKTQAL. An interaction with CALM region spans residues 227–237; the sequence is LKSVSERLSIL. Ser235, Ser243, and Ser245 each carry phosphoserine. The interval 240–263 is disordered; the sequence is ARPSDSNGQPEGTGEPVELKTQAL. Asn246 is modified (deamidated asparagine).

The protein belongs to the MIP/aquaporin (TC 1.A.8) family. Homotetramer; each monomer provides an independent water pore. Two homotetramers on opposing membranes can dimerize, forming a cell-cell junction. Interacts with CALM; the calcium-calmodulin/CALM complex interacts with the cytoplasmic domains of two aquaporins, leading to channel closure. Interacts with BFSP1 (via C-terminus); prevents calcium-dependent inhibition of the water channel activity. Subject to partial proteolytic cleavage in the eye lens core. Partial proteolysis promotes interactions between tetramers from adjoining membranes. In terms of processing, fatty acylated at Met-1 and Lys-238. The acyl modifications, in decreasing order of ion abundance, are: oleoyl (C18:1) &gt; palmitoyl (C16:0) &gt; stearoyl (C18:0) &gt; eicosenoyl (C20:1) &gt; dihomo-gamma-linolenoyl (C20:3) &gt; palmitoleoyl (C16:1) &gt; eicosadienoyl (C20:2).

The protein localises to the cell membrane. It is found in the cell junction. It catalyses the reaction H2O(in) = H2O(out). The water channel activity is inhibited by calcium through calmodulin/CALM. Functionally, aquaporins form homotetrameric transmembrane channels, with each monomer independently mediating water transport across the plasma membrane along its osmotic gradient. Specifically expressed in lens fiber cells, this aquaporin is crucial for maintaining lens water homeostasis and transparency. Beyond water permeability, it also acts as a cell-to-cell adhesion molecule, forming thin junctions between lens fiber cells that are essential for maintaining the ordered structure and transparency of the lens. In Oryctolagus cuniculus (Rabbit), this protein is Lens fiber major intrinsic protein.